Consider the following 134-residue polypeptide: Small ribosomal subunit protein uS8c (134 aa).

It belongs to the universal ribosomal protein uS8 family. Part of the 30S ribosomal subunit.

The protein resides in the plastid. It localises to the chloroplast. One of the primary rRNA binding proteins, it binds directly to 16S rRNA central domain where it helps coordinate assembly of the platform of the 30S subunit. The sequence is that of Small ribosomal subunit protein uS8c (rps8) from Capsella bursa-pastoris (Shepherd's purse).